Here is a 736-residue protein sequence, read N- to C-terminus: Phosphoribosylformylglycinamidine synthase subunit PurL (736 aa).

Residue His50 is part of the active site. ATP is bound by residues Tyr53 and Lys92. Residue Glu94 coordinates Mg(2+). Residues 95-98 (SHNH) and Arg117 each bind substrate. The active-site Proton acceptor is the His96. Asp118 provides a ligand contact to Mg(2+). Gln241 contributes to the substrate binding site. Mg(2+) is bound at residue Asp269. Residue 313-315 (ESQ) participates in substrate binding. Positions 495 and 532 each coordinate ATP. Asn533 provides a ligand contact to Mg(2+). Ser535 lines the substrate pocket.

It belongs to the FGAMS family. In terms of assembly, monomer. Part of the FGAM synthase complex composed of 1 PurL, 1 PurQ and 2 PurS subunits.

Its subcellular location is the cytoplasm. It catalyses the reaction N(2)-formyl-N(1)-(5-phospho-beta-D-ribosyl)glycinamide + L-glutamine + ATP + H2O = 2-formamido-N(1)-(5-O-phospho-beta-D-ribosyl)acetamidine + L-glutamate + ADP + phosphate + H(+). It functions in the pathway purine metabolism; IMP biosynthesis via de novo pathway; 5-amino-1-(5-phospho-D-ribosyl)imidazole from N(2)-formyl-N(1)-(5-phospho-D-ribosyl)glycinamide: step 1/2. Part of the phosphoribosylformylglycinamidine synthase complex involved in the purines biosynthetic pathway. Catalyzes the ATP-dependent conversion of formylglycinamide ribonucleotide (FGAR) and glutamine to yield formylglycinamidine ribonucleotide (FGAM) and glutamate. The FGAM synthase complex is composed of three subunits. PurQ produces an ammonia molecule by converting glutamine to glutamate. PurL transfers the ammonia molecule to FGAR to form FGAM in an ATP-dependent manner. PurS interacts with PurQ and PurL and is thought to assist in the transfer of the ammonia molecule from PurQ to PurL. The chain is Phosphoribosylformylglycinamidine synthase subunit PurL from Bartonella tribocorum (strain CIP 105476 / IBS 506).